Consider the following 79-residue polypeptide: ATP synthase subunit c (79 aa).

A run of 2 helical transmembrane segments spans residues 11–31 (MAAA…IGIL) and 53–73 (FFIV…LGLY).

It belongs to the ATPase C chain family. As to quaternary structure, F-type ATPases have 2 components, F(1) - the catalytic core - and F(0) - the membrane proton channel. F(1) has five subunits: alpha(3), beta(3), gamma(1), delta(1), epsilon(1). F(0) has three main subunits: a(1), b(2) and c(10-14). The alpha and beta chains form an alternating ring which encloses part of the gamma chain. F(1) is attached to F(0) by a central stalk formed by the gamma and epsilon chains, while a peripheral stalk is formed by the delta and b chains.

Its subcellular location is the cell inner membrane. Its function is as follows. F(1)F(0) ATP synthase produces ATP from ADP in the presence of a proton or sodium gradient. F-type ATPases consist of two structural domains, F(1) containing the extramembraneous catalytic core and F(0) containing the membrane proton channel, linked together by a central stalk and a peripheral stalk. During catalysis, ATP synthesis in the catalytic domain of F(1) is coupled via a rotary mechanism of the central stalk subunits to proton translocation. In terms of biological role, key component of the F(0) channel; it plays a direct role in translocation across the membrane. A homomeric c-ring of between 10-14 subunits forms the central stalk rotor element with the F(1) delta and epsilon subunits. The chain is ATP synthase subunit c from Yersinia enterocolitica serotype O:8 / biotype 1B (strain NCTC 13174 / 8081).